Here is a 596-residue protein sequence, read N- to C-terminus: Arginine--tRNA ligase (596 aa).

Residues 127–137 carry the 'HIGH' region motif; the sequence is ANPTGPVHVGR.

It belongs to the class-I aminoacyl-tRNA synthetase family.

It localises to the cytoplasm. It catalyses the reaction tRNA(Arg) + L-arginine + ATP = L-arginyl-tRNA(Arg) + AMP + diphosphate. This is Arginine--tRNA ligase from Haloquadratum walsbyi (strain DSM 16790 / HBSQ001).